The primary structure comprises 245 residues: Orotidine 5'-phosphate decarboxylase (245 aa).

Residues aspartate 22, lysine 44, aspartate 71–threonine 80, threonine 131, arginine 192, glutamine 201, glycine 221, and arginine 222 contribute to the substrate site. Catalysis depends on lysine 73, which acts as the Proton donor.

Belongs to the OMP decarboxylase family. Type 1 subfamily. In terms of assembly, homodimer.

The catalysed reaction is orotidine 5'-phosphate + H(+) = UMP + CO2. It participates in pyrimidine metabolism; UMP biosynthesis via de novo pathway; UMP from orotate: step 2/2. Functionally, catalyzes the decarboxylation of orotidine 5'-monophosphate (OMP) to uridine 5'-monophosphate (UMP). This is Orotidine 5'-phosphate decarboxylase from Salmonella typhi.